Reading from the N-terminus, the 337-residue chain is MNSTCIEEQHDLDHYLFPIVYIFVIIVSIPANIGSLCVSFLQAKKESELGIYLFSLSLSDLLYALTLPLWIDYTWNKDNWTFSPALCKGSAFLMYMNFYSSTAFLTCIAVDRYLAVVYPLKFFFLRTRRFALMVSLSIWILETIFNAVMLWEDETVVEYCDAEKSNFTLCYDKYPLEKWQINLNLFRTCTGYAIPLVTILICNRKVYQAVRHNKATENKEKKRIIKLLVSITVTFVLCFTPFHVMLLIRCILEHAVNFEDHSNSGKRTYTMYRITVALTSLNCVADPILYCFVTETGRYDMWNILKFCTGRCNTSQRQRKRILSVSTKDTMELEVLE.

Residues 1-5 lie on the Extracellular side of the membrane; the sequence is MNSTC. Asparagine 2 carries N-linked (GlcNAc...) asparagine glycosylation. 2 cysteine pairs are disulfide-bonded: cysteine 5–cysteine 160 and cysteine 87–cysteine 170. The chain crosses the membrane as a helical span at residues 6-42; that stretch reads IEEQHDLDHYLFPIVYIFVIIVSIPANIGSLCVSFLQ. Residues 43-46 lie on the Cytoplasmic side of the membrane; the sequence is AKKE. A helical membrane pass occupies residues 47–77; that stretch reads SELGIYLFSLSLSDLLYALTLPLWIDYTWNK. Residues 78–82 lie on the Extracellular side of the membrane; it reads DNWTF. Asparagine 79 carries N-linked (GlcNAc...) asparagine glycosylation. The helical transmembrane segment at 83 to 118 threads the bilayer; that stretch reads SPALCKGSAFLMYMNFYSSTAFLTCIAVDRYLAVVY. Residues 119 to 126 are Cytoplasmic-facing; it reads PLKFFFLR. Residues 127 to 153 form a helical membrane-spanning segment; it reads TRRFALMVSLSIWILETIFNAVMLWED. Residues 154–174 are Extracellular-facing; that stretch reads ETVVEYCDAEKSNFTLCYDKY. Positions 154 to 174 are extracellular loop 2 (ECL2); it reads ETVVEYCDAEKSNFTLCYDKY. N-linked (GlcNAc...) asparagine glycosylation is present at asparagine 166. Residues 175-212 form a helical membrane-spanning segment; sequence PLEKWQINLNLFRTCTGYAIPLVTILICNRKVYQAVRH. The Cytoplasmic portion of the chain corresponds to 213–216; it reads NKAT. Residues 217 to 252 traverse the membrane as a helical segment; the sequence is ENKEKKRIIKLLVSITVTFVLCFTPFHVMLLIRCIL. Over 253 to 264 the chain is Extracellular; that stretch reads EHAVNFEDHSNS. Residues 265-293 form a helical membrane-spanning segment; sequence GKRTYTMYRITVALTSLNCVADPILYCFV. Over 294–337 the chain is Cytoplasmic; that stretch reads TETGRYDMWNILKFCTGRCNTSQRQRKRILSVSTKDTMELEVLE.

It belongs to the G-protein coupled receptor 1 family. Predominantly expressed in thymus, spleen, lymph nodes, small intestine, lung, placenta and peripheral blood leukocytes.

It localises to the cell membrane. The protein localises to the early endosome membrane. Its subcellular location is the late endosome membrane. With respect to regulation, activated by a network of residues that connects an extracellular-facing cavity to Glu-142, a conserved charged residue buried in the transmembrane core of the receptor. Protonation likely drives conformational changes in extracellular loop 2 (ECL2), which stabilizes movement of transmembrane 3 (TM3) and a series of rearrangements that connect the extracellular-facing cavity to Glu-142, a residue only conserved in proton-sensing G-protein coupled receptors. Activated by BTB09089, a positive allosteric modulator. In terms of biological role, proton-sensing G-protein coupled receptor activated by extracellular pH, which is required to monitor pH changes and generate adaptive reactions. Activated by an optimal pH of 7.4. Ligand binding causes a conformation change that triggers signaling via guanine nucleotide-binding proteins (G proteins) and modulates the activity of downstream effectors, such as adenylate cyclase. GPR65 is mainly coupled to G(s) G proteins and mediates activation of adenylate cyclase activity. May also act as a receptor for the glycosphingolipid psychosine (PSY) and several related glycosphingolipids. Plays a role in immune response by maintaining lysosome function and regulating T-cell metabolism. Acts as a regulator of inflammation by mediating pH-sensing of extracellular acidification which takes place in inflamed tissues: activation regulates endo-lysosomal function of immune cells and T-cell metabolism. Constitutively active in endosomes and stimulates adenylate cyclase production from endosomes independently from extracellular pH changes. This is G-protein coupled receptor 65 from Homo sapiens (Human).